A 352-amino-acid polypeptide reads, in one-letter code: Maleylacetate reductase (352 aa).

Belongs to the iron-containing alcohol dehydrogenase family.

It carries out the reaction 3-oxoadipate + NAD(+) = maleylacetate + NADH + H(+). The catalysed reaction is 3-oxoadipate + NADP(+) = maleylacetate + NADPH + H(+). The protein operates within aromatic compound metabolism; 3-chlorocatechol degradation. This is Maleylacetate reductase (clcE) from Pseudomonas knackmussii (strain DSM 6978 / CCUG 54928 / LMG 23759 / B13).